A 467-amino-acid polypeptide reads, in one-letter code: Dihydrolipoyl dehydrogenase (467 aa).

FAD-binding positions include 33–41 (EPKYWGGIC), K50, and G113. C41 and C46 are joined by a disulfide. Residues 181–185 (GAGAI), E204, and 269–272 (AIGF) each bind NAD(+). FAD-binding residues include D312 and A320. H446 functions as the Proton acceptor in the catalytic mechanism.

Belongs to the class-I pyridine nucleotide-disulfide oxidoreductase family. As to quaternary structure, homodimer. Part of the PDH complex, consisting of multiple copies of AceE (E1), DlaT (E2) and Lpd (E3), and of the BCKADH complex, consisting of multiple copies of BkdA/BkdB (E1), BkdC (E2) and Lpd (E3). FAD serves as cofactor.

It localises to the cytoplasm. The catalysed reaction is N(6)-[(R)-dihydrolipoyl]-L-lysyl-[protein] + NAD(+) = N(6)-[(R)-lipoyl]-L-lysyl-[protein] + NADH + H(+). Functionally, lipoamide dehydrogenase is a component of the alpha-ketoacid dehydrogenase complexes. Catalyzes the reoxidation of dihydrolipoyl groups which are covalently attached to the lipoate acyltransferase components (E2) of the complexes. This is Dihydrolipoyl dehydrogenase (lpd) from Mycobacterium leprae (strain TN).